A 133-amino-acid polypeptide reads, in one-letter code: Putative biopolymer transport protein ExbD-like 1 (133 aa).

The Cytoplasmic portion of the chain corresponds to methionine 1 to asparagine 15. A helical transmembrane segment spans residues isoleucine 16–valine 32. Over threonine 33–proline 133 the chain is Periplasmic.

It belongs to the ExbD/TolR family.

The protein resides in the cell inner membrane. In Helicobacter pylori (strain J99 / ATCC 700824) (Campylobacter pylori J99), this protein is Putative biopolymer transport protein ExbD-like 1.